We begin with the raw amino-acid sequence, 378 residues long: Acetylornithine deacetylase (378 aa).

Position 76 (His-76) interacts with Zn(2+). Residue Asp-78 is part of the active site. Asp-108 lines the Zn(2+) pocket. Glu-140 is an active-site residue. 3 residues coordinate Zn(2+): Glu-141, Glu-165, and His-351.

The protein belongs to the peptidase M20A family. ArgE subfamily. As to quaternary structure, homodimer. It depends on Zn(2+) as a cofactor. Co(2+) serves as cofactor. Glutathione is required as a cofactor.

Its subcellular location is the cytoplasm. The enzyme catalyses N(2)-acetyl-L-ornithine + H2O = L-ornithine + acetate. Its pathway is amino-acid biosynthesis; L-arginine biosynthesis; L-ornithine from N(2)-acetyl-L-ornithine (linear): step 1/1. Its function is as follows. Catalyzes the hydrolysis of the amide bond of N(2)-acetylated L-amino acids. Cleaves the acetyl group from N-acetyl-L-ornithine to form L-ornithine, an intermediate in L-arginine biosynthesis pathway, and a branchpoint in the synthesis of polyamines. The polypeptide is Acetylornithine deacetylase (Aliivibrio fischeri (strain MJ11) (Vibrio fischeri)).